The following is a 92-amino-acid chain: Ictacalcin (92 aa).

EF-hand domains are found at residues I12–N47 and S49–L84. Residues T27, E32, D62, N64, D66, and E73 each contribute to the Ca(2+) site.

This sequence belongs to the S-100 family. As to expression, abundant in epithelial cells of olfactory rosette, barbel, skin and gill but not brain or muscle.

Functionally, plays an important role in catfish calcium homeostasis. The polypeptide is Ictacalcin (Ictalurus punctatus (Channel catfish)).